Here is a 90-residue protein sequence, read N- to C-terminus: Gene 56 protein (90 aa).

One can recognise a Glutaredoxin domain in the interval 1–90; sequence MRTMFTPITI…DYYTASETGL (90 aa). The cysteines at positions 16 and 19 are disulfide-linked.

In Mycobacterium phage D29 (Mycobacteriophage D29), this protein is Gene 56 protein (56).